A 400-amino-acid polypeptide reads, in one-letter code: MGAPLSTARRGMGQNLSVPNPLGFFPDHQLDPLFRANSSSPDWDFNTNKDNWPMANKVGVGGFGPGFTPPHGGLLGWSPQAQGILTTSPPDPPPASTNRRSGRKPTPVSPPLRDTHPQAMQWNSTQFHQALLDPRVRGLYLPAGGSSSETQNPVPTIASLTSSIFSKTGDPAMNMENITSGLLGPLLVLQAVCFLLTKILTIPQSLDSWWTSLNFLGVPPGCPGQNSQSPISNHLPTSCPPTCPGYRWMCLRRFIIFLFILLLCLIFLLVLLDYQGMLPVCPLLPGSTTTSTGPCKTCTTLAQGTSMFPSCCCTKPSDGNCTCIPIPSSWAFGKYLWEWASARFSWLSLLVQFVQWCVGLSPTVWLLVIWMIWYWGPNLCSILSPFIPLLPIFCYLWASI.

An N-acetylmethionine modification is found at Met1. The N-myristoyl glycine; by host moiety is linked to residue Gly2. The tract at residues 2–119 is pre-S1; the sequence is GAPLSTARRG…PPLRDTHPQA (118 aa). Positions 2–174 are pre-S; it reads GAPLSTARRG…FSKTGDPAMN (173 aa). Over 2 to 181 the chain is Virion surface; in external conformation; it reads GAPLSTARRG…AMNMENITSG (180 aa). The Intravirion; in internal conformation segment spans residues 2 to 253; sequence GAPLSTARRG…PGYRWMCLRR (252 aa). Residue Pro4 is glycosylated (N-linked (GlcNAc...) asparagine). Residues 70 to 115 form a disordered region; it reads PHGGLLGWSPQAQGILTTSPPDPPPASTNRRSGRKPTPVSPPLRDT. Residues 79–88 are compositionally biased toward polar residues; it reads PQAQGILTTS. Residues 120–174 are pre-S2; it reads MQWNSTQFHQALLDPRVRGLYLPAGGSSSETQNPVPTIASLTSSIFSKTGDPAMN. The chain crosses the membrane as a helical span at residues 182 to 202; it reads LLGPLLVLQAVCFLLTKILTI. The Intravirion; in external conformation portion of the chain corresponds to 203–253; sequence PQSLDSWWTSLNFLGVPPGCPGQNSQSPISNHLPTSCPPTCPGYRWMCLRR. The helical transmembrane segment at 254-274 threads the bilayer; the sequence is FIIFLFILLLCLIFLLVLLDY. Over 275–348 the chain is Virion surface; the sequence is QGMLPVCPLL…WASARFSWLS (74 aa). Asn320 is a glycosylation site (N-linked (GlcNAc...) asparagine; by host). A helical membrane pass occupies residues 349–369; sequence LLVQFVQWCVGLSPTVWLLVI. Over 370–375 the chain is Intravirion; that stretch reads WMIWYW. A helical transmembrane segment spans residues 376-398; it reads GPNLCSILSPFIPLLPIFCYLWA. At 399 to 400 the chain is on the virion surface side; the sequence is SI.

The protein belongs to the orthohepadnavirus major surface antigen family. In terms of assembly, in its internal form (Li-HBsAg), interacts with the capsid protein and with the isoform S. Interacts with host chaperone CANX. As to quaternary structure, associates with host chaperone CANX through its pre-S2 N glycan; this association may be essential for isoform M proper secretion. Interacts with isoform L. Interacts with the antigens of satellite virus HDV (HDVAgs); this interaction is required for encapsidation of HDV genomic RNA. Post-translationally, isoform M is N-terminally acetylated by host at a ratio of 90%, and N-glycosylated by host at the pre-S2 region. Myristoylated.

The protein localises to the virion membrane. Functionally, the large envelope protein exists in two topological conformations, one which is termed 'external' or Le-HBsAg and the other 'internal' or Li-HBsAg. In its external conformation the protein attaches the virus to cell receptors and thereby initiating infection. This interaction determines the species specificity and liver tropism. This attachment induces virion internalization predominantly through caveolin-mediated endocytosis. The large envelope protein also assures fusion between virion membrane and endosomal membrane. In its internal conformation the protein plays a role in virion morphogenesis and mediates the contact with the nucleocapsid like a matrix protein. The middle envelope protein plays an important role in the budding of the virion. It is involved in the induction of budding in a nucleocapsid independent way. In this process the majority of envelope proteins bud to form subviral lipoprotein particles of 22 nm of diameter that do not contain a nucleocapsid. This chain is Large envelope protein, found in Hepatitis B virus genotype H subtype adw4 (isolate Nicaragua/2928Nic/1997) (HBV-H).